Here is a 945-residue protein sequence, read N- to C-terminus: Isoleucine--tRNA ligase (945 aa).

Residues Pro66–His76 carry the 'HIGH' region motif. L-isoleucyl-5'-AMP is bound at residue Glu581. A 'KMSKS' region motif is present at residues Lys622–Ser626. Lys625 contacts ATP. Cys908, Cys911, Cys928, and Cys931 together coordinate Zn(2+).

This sequence belongs to the class-I aminoacyl-tRNA synthetase family. IleS type 1 subfamily. As to quaternary structure, monomer. Zn(2+) serves as cofactor.

It localises to the cytoplasm. It catalyses the reaction tRNA(Ile) + L-isoleucine + ATP = L-isoleucyl-tRNA(Ile) + AMP + diphosphate. Catalyzes the attachment of isoleucine to tRNA(Ile). As IleRS can inadvertently accommodate and process structurally similar amino acids such as valine, to avoid such errors it has two additional distinct tRNA(Ile)-dependent editing activities. One activity is designated as 'pretransfer' editing and involves the hydrolysis of activated Val-AMP. The other activity is designated 'posttransfer' editing and involves deacylation of mischarged Val-tRNA(Ile). This chain is Isoleucine--tRNA ligase, found in Paraburkholderia phymatum (strain DSM 17167 / CIP 108236 / LMG 21445 / STM815) (Burkholderia phymatum).